Here is a 738-residue protein sequence, read N- to C-terminus: Glycogen [starch] synthase, muscle (738 aa).

Phosphoserine; by AMPK and PKA is present on serine 8. A Phosphoserine modification is found at serine 11. Residue lysine 39 participates in UDP binding. UDP-alpha-D-glucose is bound by residues histidine 205 and arginine 211. Residues histidine 291, glutamate 292, glutamine 294, histidine 297, and lysine 301 each contribute to the alpha-D-glucose 6-phosphate site. Residue arginine 331 participates in UDP binding. Residue arginine 331 coordinates UDP-alpha-D-glucose. At serine 412 the chain carries Phosphoserine. An alpha-D-glucose 6-phosphate-binding site is contributed by histidine 501. Residues glutamate 510, tryptophan 512, and glycine 513 each contribute to the UDP-alpha-D-glucose site. Threonine 515 contributes to the UDP binding site. 2 residues coordinate alpha-D-glucose 6-phosphate: arginine 582 and arginine 586. Residues glutamine 632–asparagine 738 form a disordered region. At serine 641 the chain carries Phosphoserine; by DYRK2, GSK3-alpha, GSK3-beta and PASK. A phosphoserine mark is found at serine 645, serine 649, serine 652, serine 653, serine 657, and serine 672. Residues glutamate 658–alanine 681 are compositionally biased toward acidic residues. Basic and acidic residues predominate over residues alanine 682–arginine 695. Serine 698, serine 709, and serine 711 each carry phosphoserine. A compositionally biased stretch (low complexity) spans serine 698–asparagine 738. Threonine 722 and threonine 724 each carry phosphothreonine. Residues serine 728 and serine 732 each carry the phosphoserine modification.

It belongs to the glycosyltransferase 3 family. In terms of assembly, part of the GYS1-GYG1 complex, a heterooctamer composed of a tetramer of GYS1 and 2 dimers of GYG1, where each GYS1 protomer binds to one GYG1 subunit (via GYG1 C-terminus); the GYS1 tetramer may dissociate from GYG1 dimers to continue glycogen polymerization on its own. In terms of processing, primed phosphorylation at Ser-657 (site 5) by CSNK2A1 and CSNK2A2 is required for inhibitory phosphorylation at Ser-641 (site 3a), Ser-645 (site 3b), Ser-649 (site 3c) and Ser-653 (site 4) by GSK3A an GSK3B. Phosphorylated at Ser-641 by PASK, leading to inactivation; phosphorylation by PASK is inhibited by glycogen. Phosphorylated at Ser-641 by DYRK2, leading to inactivation. Dephosphorylation at Ser-641 and Ser-645 by PP1 activates the enzyme. Phosphorylation at Ser-8 by AMPK inactivates the enzyme activity.

The enzyme catalyses [(1-&gt;4)-alpha-D-glucosyl](n) + UDP-alpha-D-glucose = [(1-&gt;4)-alpha-D-glucosyl](n+1) + UDP + H(+). It functions in the pathway glycan biosynthesis; glycogen biosynthesis. Allosteric activation by glucose-6-phosphate. Phosphorylation reduces the activity towards UDP-glucose. When in the non-phosphorylated state, glycogen synthase does not require glucose-6-phosphate as an allosteric activator; when phosphorylated it does. Functionally, glycogen synthase participates in the glycogen biosynthetic process along with glycogenin and glycogen branching enzyme. Extends the primer composed of a few glucose units formed by glycogenin by adding new glucose units to it. In this context, glycogen synthase transfers the glycosyl residue from UDP-Glc to the non-reducing end of alpha-1,4-glucan. This chain is Glycogen [starch] synthase, muscle (Gys1), found in Mus musculus (Mouse).